Here is a 274-residue protein sequence, read N- to C-terminus: NADH-ubiquinone oxidoreductase chain 2 (274 aa).

8 helical membrane-spanning segments follow: residues 28–48 (MIIMSALLLKSGAAPFHFWFP), 54–74 (LTWMNALMLMTWQKIAPLMLI), 79–99 (IKYLLLISVILSVIIGAIGGL), 107–127 (LMAFSSINHLGWMLSSLMFSE), 128–148 (SIWLIYFFFYSFLSFVLTFMF), 171–191 (FTLFMNFLSLGGLPPFLGFLP), 206–226 (FLLTLMMMSTLITLFFYLRIC), and 254–274 (LIMTFFSIFGLFMISLFYFMF).

This sequence belongs to the complex I subunit 2 family.

It is found in the mitochondrion inner membrane. The enzyme catalyses a ubiquinone + NADH + 5 H(+)(in) = a ubiquinol + NAD(+) + 4 H(+)(out). Functionally, core subunit of the mitochondrial membrane respiratory chain NADH dehydrogenase (Complex I) that is believed to belong to the minimal assembly required for catalysis. Complex I functions in the transfer of electrons from NADH to the respiratory chain. The immediate electron acceptor for the enzyme is believed to be ubiquinone. This is NADH-ubiquinone oxidoreductase chain 2 (mt:ND2) from Drosophila sechellia (Fruit fly).